We begin with the raw amino-acid sequence, 325 residues long: Malate dehydrogenase (325 aa).

7–13 is an NADP(+) binding site; that stretch reads GSTGRVG. Residues R84 and R90 each contribute to the substrate site. NADP(+) contacts are provided by residues N97 and 120–122; that span reads VTN. N122 and R153 together coordinate substrate. The active-site Proton acceptor is H177.

Belongs to the LDH/MDH superfamily.

The catalysed reaction is (S)-malate + NADP(+) = oxaloacetate + NADPH + H(+). It carries out the reaction (S)-malate + NAD(+) = oxaloacetate + NADH + H(+). Functionally, catalyzes the reversible oxidation of malate to oxaloacetate. Can use NAD(+) and NADP(+) with similar specific activity. This chain is Malate dehydrogenase, found in Methanothermobacter marburgensis (strain ATCC BAA-927 / DSM 2133 / JCM 14651 / NBRC 100331 / OCM 82 / Marburg) (Methanobacterium thermoautotrophicum).